The chain runs to 205 residues: LexA repressor (205 aa).

The segment at residues 28–48 (RAEIAASLGFRSPNAAEEHLK) is a DNA-binding region (H-T-H motif). Residues Ser122 and Lys159 each act as for autocatalytic cleavage activity in the active site.

The protein belongs to the peptidase S24 family. Homodimer.

It catalyses the reaction Hydrolysis of Ala-|-Gly bond in repressor LexA.. Functionally, represses a number of genes involved in the response to DNA damage (SOS response), including recA and lexA. Binds to the 16 bp palindromic sequence 5'-CTGTATATATATACAG-3'. In the presence of single-stranded DNA, RecA interacts with LexA causing an autocatalytic cleavage which disrupts the DNA-binding part of LexA, leading to derepression of the SOS regulon and eventually DNA repair. The polypeptide is LexA repressor (Providencia rettgeri).